Reading from the N-terminus, the 194-residue chain is Ribonuclease HII (194 aa).

The RNase H type-2 domain maps to 3–193 (ILTAGVDEAG…VRNLLAQQAL (191 aa)). Positions 9, 10, and 101 each coordinate a divalent metal cation.

It belongs to the RNase HII family. Mn(2+) is required as a cofactor. It depends on Mg(2+) as a cofactor.

It is found in the cytoplasm. It catalyses the reaction Endonucleolytic cleavage to 5'-phosphomonoester.. Endonuclease that specifically degrades the RNA of RNA-DNA hybrids. This is Ribonuclease HII from Neisseria gonorrhoeae (strain ATCC 700825 / FA 1090).